The sequence spans 413 residues: Glucose-1-phosphate adenylyltransferase (413 aa).

Alpha-D-glucose 1-phosphate is bound by residues Gly-161, 176–177 (EK), and Ser-195.

It belongs to the bacterial/plant glucose-1-phosphate adenylyltransferase family. As to quaternary structure, homotetramer.

The catalysed reaction is alpha-D-glucose 1-phosphate + ATP + H(+) = ADP-alpha-D-glucose + diphosphate. Its pathway is glycan biosynthesis; glycogen biosynthesis. Functionally, involved in the biosynthesis of ADP-glucose, a building block required for the elongation reactions to produce glycogen. Catalyzes the reaction between ATP and alpha-D-glucose 1-phosphate (G1P) to produce pyrophosphate and ADP-Glc. This chain is Glucose-1-phosphate adenylyltransferase, found in Anaeromyxobacter dehalogenans (strain 2CP-C).